Here is a 135-residue protein sequence, read N- to C-terminus: Small ribosomal subunit protein uS12 (135 aa).

Residue Asp89 is modified to 3-methylthioaspartic acid. The interval 101 to 135 (SLDTSGVADRKQSRSKYGAKQPKAGAAAPVKGKRR) is disordered. A compositionally biased stretch (low complexity) spans 116-135 (KYGAKQPKAGAAAPVKGKRR).

It belongs to the universal ribosomal protein uS12 family. As to quaternary structure, part of the 30S ribosomal subunit. Contacts proteins S8 and S17. May interact with IF1 in the 30S initiation complex.

With S4 and S5 plays an important role in translational accuracy. In terms of biological role, interacts with and stabilizes bases of the 16S rRNA that are involved in tRNA selection in the A site and with the mRNA backbone. Located at the interface of the 30S and 50S subunits, it traverses the body of the 30S subunit contacting proteins on the other side and probably holding the rRNA structure together. The combined cluster of proteins S8, S12 and S17 appears to hold together the shoulder and platform of the 30S subunit. The sequence is that of Small ribosomal subunit protein uS12 from Chlorobium phaeobacteroides (strain DSM 266 / SMG 266 / 2430).